The following is a 384-amino-acid chain: uncharacterized protein (384 aa).

A compositionally biased stretch (basic residues) spans 327-339 (KKEKKEKKEKKPK). Positions 327–358 (KKEKKEKKEKKPKKAVEEEPKQYLTPEFVNDD) are disordered.

This is an uncharacterized protein from Magallana gigas (Pacific oyster).